A 245-amino-acid chain; its full sequence is tRNA pseudouridine synthase A (245 aa).

The active-site Nucleophile is Asp52. Tyr110 is a substrate binding site.

The protein belongs to the tRNA pseudouridine synthase TruA family. As to quaternary structure, homodimer.

The catalysed reaction is uridine(38/39/40) in tRNA = pseudouridine(38/39/40) in tRNA. Functionally, formation of pseudouridine at positions 38, 39 and 40 in the anticodon stem and loop of transfer RNAs. This chain is tRNA pseudouridine synthase A, found in Borrelia duttonii (strain Ly).